The following is a 74-amino-acid chain: UPF0235 protein tsr1994 (74 aa).

This sequence belongs to the UPF0235 family.

The sequence is that of UPF0235 protein tsr1994 from Thermosynechococcus vestitus (strain NIES-2133 / IAM M-273 / BP-1).